We begin with the raw amino-acid sequence, 479 residues long: Glycogen synthase (479 aa).

Lys15 contacts ADP-alpha-D-glucose.

Belongs to the glycosyltransferase 1 family. Bacterial/plant glycogen synthase subfamily.

It carries out the reaction [(1-&gt;4)-alpha-D-glucosyl](n) + ADP-alpha-D-glucose = [(1-&gt;4)-alpha-D-glucosyl](n+1) + ADP + H(+). Its pathway is glycan biosynthesis; glycogen biosynthesis. Synthesizes alpha-1,4-glucan chains using ADP-glucose. The protein is Glycogen synthase of Acidiphilium cryptum (strain JF-5).